The following is a 409-amino-acid chain: Peptidase T (409 aa).

Residue His78 coordinates Zn(2+). Asp80 is a catalytic residue. Asp140 serves as a coordination point for Zn(2+). Glu174 (proton acceptor) is an active-site residue. Glu175, Asp197, and His379 together coordinate Zn(2+).

This sequence belongs to the peptidase M20B family. The cofactor is Zn(2+).

The protein localises to the cytoplasm. It carries out the reaction Release of the N-terminal residue from a tripeptide.. Cleaves the N-terminal amino acid of tripeptides. The protein is Peptidase T of Aliivibrio salmonicida (strain LFI1238) (Vibrio salmonicida (strain LFI1238)).